Consider the following 716-residue polypeptide: Zinc finger protein on ecdysone puffs (716 aa).

Disordered regions lie at residues 103–168 (PSLL…GGIR) and 182–208 (KNAN…ESPY). A compositionally biased stretch (basic and acidic residues) spans 188-203 (KKKEPTPGEKKIESPT). At S201 the chain carries Phosphoserine. Residue T203 is modified to Phosphothreonine. Phosphoserine is present on S206. The segment at 216–240 (FYCHLCKKHMWDANSFENHIKGRTH) adopts a C2H2-type 1 zinc-finger fold. The segment at 288–310 (DYCTMCDLNFHGHISTHRKSEGH) adopts a C2H2-type 2; atypical zinc-finger fold. The segment at 319 to 343 (PKCIECNKEFATRIDYDTHLLSAEH) adopts a C2H2-type 3 zinc-finger fold. Basic and acidic residues predominate over residues 350 to 359 (NNTKVGERKR). A disordered region spans residues 350-447 (NNTKVGERKR…EEEEVALPVD (98 aa)). Positions 379 to 383 (KRKKK) match the Nuclear localization signal motif. Residues 386-401 (KKEGEAADGEAKKEGA) are compositionally biased toward basic and acidic residues. A compositionally biased stretch (acidic residues) spans 405 to 414 (EGAEGDEAEG). The segment covering 415–431 (EEAKEGEEAADETKEGD) has biased composition (basic and acidic residues). Acidic residues predominate over residues 432–447 (ELNESQEEEEVALPVD). The C2H2-type 4 zinc-finger motif lies at 489–513 (YECSVCSKFFDTEVTAEIHSRTATH). Positions 534-716 (RAAAALEENE…QRARGRYNRY (183 aa)) are disordered. A compositionally biased stretch (basic and acidic residues) spans 541–551 (ENERKKRKVEE). The Nuclear localization signal motif lies at 544-548 (RKKRK). Acidic residues predominate over residues 560 to 638 (AAEETTEGAE…GQEGEQEPEP (79 aa)). The span at 639–656 (EPAPVQTPAPAEPAPPAK) shows a compositional bias: pro residues. Residues 657 to 704 (TPAKTPTKAAAPAAVASPAAAATSADASPSPAKKATPARAAAGAKATP) show a composition bias toward low complexity. Residues S673, S684, and S686 each carry the phosphoserine modification. T692 is modified (phosphothreonine). The segment covering 707-716 (QRARGRYNRY) has biased composition (basic residues).

Its subcellular location is the nucleus. It is found in the chromosome. May play a role in the process of early and late gene activation, or possibly in RNA processing, for a defined set of developmentally regulated loci. This chain is Zinc finger protein on ecdysone puffs (Pep), found in Drosophila melanogaster (Fruit fly).